Reading from the N-terminus, the 866-residue chain is DNA mismatch repair protein MutS (866 aa).

618 to 625 (GPNMSGKS) is a binding site for ATP.

The protein belongs to the DNA mismatch repair MutS family.

Functionally, this protein is involved in the repair of mismatches in DNA. It is possible that it carries out the mismatch recognition step. This protein has a weak ATPase activity. This Flavobacterium psychrophilum (strain ATCC 49511 / DSM 21280 / CIP 103535 / JIP02/86) protein is DNA mismatch repair protein MutS.